A 139-amino-acid chain; its full sequence is Large ribosomal subunit protein uL13 (139 aa).

This sequence belongs to the universal ribosomal protein uL13 family. Part of the 50S ribosomal subunit.

In terms of biological role, this protein is one of the early assembly proteins of the 50S ribosomal subunit, although it is not seen to bind rRNA by itself. It is important during the early stages of 50S assembly. The sequence is that of Large ribosomal subunit protein uL13 from Wolinella succinogenes (strain ATCC 29543 / DSM 1740 / CCUG 13145 / JCM 31913 / LMG 7466 / NCTC 11488 / FDC 602W) (Vibrio succinogenes).